The sequence spans 198 residues: ATP synthase subunit delta (198 aa).

Belongs to the ATPase delta chain family. F-type ATPases have 2 components, F(1) - the catalytic core - and F(0) - the membrane proton channel. F(1) has five subunits: alpha(3), beta(3), gamma(1), delta(1), epsilon(1). F(0) has three main subunits: a(1), b(2) and c(10-14). The alpha and beta chains form an alternating ring which encloses part of the gamma chain. F(1) is attached to F(0) by a central stalk formed by the gamma and epsilon chains, while a peripheral stalk is formed by the delta and b chains.

The protein resides in the cell inner membrane. Its function is as follows. F(1)F(0) ATP synthase produces ATP from ADP in the presence of a proton or sodium gradient. F-type ATPases consist of two structural domains, F(1) containing the extramembraneous catalytic core and F(0) containing the membrane proton channel, linked together by a central stalk and a peripheral stalk. During catalysis, ATP synthesis in the catalytic domain of F(1) is coupled via a rotary mechanism of the central stalk subunits to proton translocation. Functionally, this protein is part of the stalk that links CF(0) to CF(1). It either transmits conformational changes from CF(0) to CF(1) or is implicated in proton conduction. The polypeptide is ATP synthase subunit delta (Gluconacetobacter diazotrophicus (strain ATCC 49037 / DSM 5601 / CCUG 37298 / CIP 103539 / LMG 7603 / PAl5)).